The sequence spans 3685 residues: Dystrophin (3685 aa).

The actin-binding stretch occupies residues methionine 1–proline 240. Calponin-homology (CH) domains follow at residues aspartate 15–glutamine 119 and threonine 134–proline 240. The interval proline 63 to histidine 72 is ANK2- and ANK-3 binding. Spectrin repeat units lie at residues valine 339–arginine 447, valine 448–aspartate 556, leucine 559–glutamine 667, glutamate 719–tyrosine 828, asparagine 830–threonine 934, arginine 943–glutamate 1045, asparagine 1048–glycine 1154, glutamate 1157–glutamate 1263, alanine 1266–glutamine 1367, serine 1368–lysine 1463, glutamate 1468–lysine 1568, lysine 1571–glutamate 1676, lysine 1679–isoleucine 1778, proline 1779–glutamate 1874, histidine 1877–glutamate 1979, glutamate 1992–arginine 2101, glutamate 2104–glutamate 2208, asparagine 2211–alanine 2318, glutamine 2319–lysine 2423, phenylalanine 2475–glutamate 2577, lysine 2580–glutamate 2686, arginine 2689–alanine 2802, lysine 2808–aspartate 2930, and arginine 2935–glutamate 3040. Asparagine 340 carries the post-translational modification Phosphothreonine. Tyrosine 344 and leucine 348 each carry phosphoserine. Glutamate 519, serine 616, and serine 629 each carry phosphothreonine. The tract at residues serine 1415–lysine 1913 is interaction with SYNM. The 34-residue stretch at threonine 3055–methionine 3088 folds into the WW domain. Positions glutamine 3058 to threonine 3408 are interaction with SYNM. The ZZ-type; degenerate zinc-finger motif lies at lysine 3308–threonine 3364. Cysteine 3313, cysteine 3316, cysteine 3337, and cysteine 3340 together coordinate Zn(2+). The segment at aspartate 3466–arginine 3518 is binds to SNTB1. Serine 3483, serine 3490, and serine 3500 each carry phosphoserine. Disordered stretches follow at residues lysine 3528–arginine 3554 and glutamate 3603–methionine 3685. Polar residues-rich tracts occupy residues asparagine 3607 to proline 3626 and glutamine 3662 to arginine 3673. Phosphoserine is present on residues serine 3612, serine 3613, serine 3617, serine 3623, serine 3624, and serine 3666.

Interacts with SYNM. Interacts with the syntrophins SNTA1, SNTB1, SNTB2, SNTG1 and SNTG2. Interacts with KRT19. Component of the dystrophin-associated glycoprotein complex which is composed of three subcomplexes: a cytoplasmic complex comprised of DMD (or UTRN), DTNA and a number of syntrophins, such as SNTB1, SNTB2, SNTG1 and SNTG2, the transmembrane dystroglycan complex, and the sarcoglycan-sarcospan complex. Interacts with DAG1 (betaDAG1) with DMD; the interaction is inhibited by phosphorylation on the PPXY motif of DAG1. Interacts with CMYA5. Directly interacts with ANK2 and ANK3; these interactions do not interfere with betaDAG1-binding and are necessary for proper localization in muscle cells. Identified in a dystroglycan complex that contains at least PRX, DRP2, UTRN, DMD and DAG1. Interacts with DTNB. Interacts with PGM5; the interaction is direct. Interacts with NOS1; localizes NOS1 to sarcolemma in muscle cells. In terms of tissue distribution, expressed in muscle fibers accumulating in the costameres of myoplasm at the sarcolemma. Expressed in brain, muscle, kidney, lung and testis. Most tissues contain transcripts of multiple isoforms. Isoform 15: Only isoform to be detected in heart and liver and is also expressed in brain, testis and hepatoma cells.

The protein resides in the cell membrane. It is found in the sarcolemma. Its subcellular location is the cytoplasm. It localises to the cytoskeleton. The protein localises to the postsynaptic cell membrane. Functionally, anchors the extracellular matrix to the cytoskeleton via F-actin. Ligand for dystroglycan. Component of the dystrophin-associated glycoprotein complex which accumulates at the neuromuscular junction (NMJ) and at a variety of synapses in the peripheral and central nervous systems and has a structural function in stabilizing the sarcolemma. Also implicated in signaling events and synaptic transmission. The protein is Dystrophin of Homo sapiens (Human).